The sequence spans 684 residues: Acetyl-coenzyme A synthetase 2 (684 aa).

Residues 207-210 (RGGK) and T326 each bind CoA. Residues 402–404 (GEP), 426–431 (DTMWQT), D517, and R532 each bind ATP. Residue S540 coordinates CoA. R543 contributes to the ATP binding site. R613 contacts CoA.

Belongs to the ATP-dependent AMP-binding enzyme family.

It catalyses the reaction acetate + ATP + CoA = acetyl-CoA + AMP + diphosphate. This Kluyveromyces lactis (strain ATCC 8585 / CBS 2359 / DSM 70799 / NBRC 1267 / NRRL Y-1140 / WM37) (Yeast) protein is Acetyl-coenzyme A synthetase 2 (ACS2).